The sequence spans 323 residues: tRNA U34 carboxymethyltransferase (323 aa).

Residues Lys-91, Trp-105, Lys-110, Gly-130, 180–181 (VE), Met-196, Tyr-200, and Arg-315 each bind carboxy-S-adenosyl-L-methionine.

Belongs to the class I-like SAM-binding methyltransferase superfamily. CmoB family. As to quaternary structure, homotetramer.

The enzyme catalyses carboxy-S-adenosyl-L-methionine + 5-hydroxyuridine(34) in tRNA = 5-carboxymethoxyuridine(34) in tRNA + S-adenosyl-L-homocysteine + H(+). Catalyzes carboxymethyl transfer from carboxy-S-adenosyl-L-methionine (Cx-SAM) to 5-hydroxyuridine (ho5U) to form 5-carboxymethoxyuridine (cmo5U) at position 34 in tRNAs. The chain is tRNA U34 carboxymethyltransferase from Trichlorobacter lovleyi (strain ATCC BAA-1151 / DSM 17278 / SZ) (Geobacter lovleyi).